The sequence spans 105 residues: MPKKVLTGVVVSDKMQKTVTVLVERQFPHPLYGKVIKRSKKYLAHDPEEKYKLGDVVEIIESRPISKRKRFRVLRLVESGRMDLVEKYLIRRQNYQSLSKRGGKA.

Belongs to the universal ribosomal protein uS17 family. Part of the 30S ribosomal subunit.

Functionally, one of the primary rRNA binding proteins, it binds specifically to the 5'-end of 16S ribosomal RNA. This chain is Small ribosomal subunit protein uS17, found in Thermus thermophilus (strain ATCC BAA-163 / DSM 7039 / HB27).